We begin with the raw amino-acid sequence, 309 residues long: MNRSDLLENPRTQTESGFLLIHKPVGMTSSDLVVTVRKKLGFKKVGHTGTLDRAASGLMILPIGSCTSFSSVFLEKEKSYEAWVRPGESTDSGDKEGEILESLSKEQTETWFQEHQEKLRDLFEQVPTWETQEAPEVSALKVNGRRRSDLFREGVALVPAVRKIKIYRYELGEFSPESISFQIRVSAGTYIRKIVMDISDRIGFPLRLEKLVRTSIGKLNLNQADSYESLLDGKIKIHPPETILDFPTVEVPDTEVRNVLNGRKIKLEWIPVNEFLLVSPEEEILAWCKKEEHGIHELDYKYLRVFPKN.

The active-site Nucleophile is the aspartate 52.

This sequence belongs to the pseudouridine synthase TruB family. Type 1 subfamily.

The catalysed reaction is uridine(55) in tRNA = pseudouridine(55) in tRNA. Functionally, responsible for synthesis of pseudouridine from uracil-55 in the psi GC loop of transfer RNAs. The polypeptide is tRNA pseudouridine synthase B (Leptospira interrogans serogroup Icterohaemorrhagiae serovar copenhageni (strain Fiocruz L1-130)).